A 646-amino-acid chain; its full sequence is Amyloid beta A4 precursor protein-binding family B member 1-interacting protein (646 aa).

Positions 82-141 (FATERDTSKGSVPVAPAPSKPQSNFSLPASFDSSKPATSSNSIAAPPPPPAFKPSKEEEE) are disordered. Polar residues predominate over residues 101–116 (KPQSNFSLPASFDSSK). Residues 162–248 (KKLVVKVEIT…NKVLFQEKKH (87 aa)) enclose the Ras-associating domain. In terms of domain architecture, PH spans 292–401 (VPDLEGVLYL…WVTGIRVAKY (110 aa)). Positions 420–646 (ASWANRTIQA…NAMQKKRTQP (227 aa)) are disordered. The segment covering 429-445 (ASSTASTPSPTPKAKAA) has biased composition (low complexity). 4 stretches are compositionally biased toward pro residues: residues 465–500 (LPPP…PPVP), 509–536 (FPPP…PPPE), 560–577 (LPPP…PPPA), and 584–598 (APPP…PAPA).

The protein belongs to the MRL family.

It is found in the cell membrane. Its subcellular location is the cytoplasm. The protein resides in the cytoskeleton. Appears to function in the signal transduction from Ras activation to actin cytoskeletal remodeling. The chain is Amyloid beta A4 precursor protein-binding family B member 1-interacting protein (apbb1ip) from Danio rerio (Zebrafish).